We begin with the raw amino-acid sequence, 282 residues long: tRNA pseudouridine synthase A (282 aa).

D53 (nucleophile) is an active-site residue. Residue Y119 coordinates substrate.

Belongs to the tRNA pseudouridine synthase TruA family. In terms of assembly, homodimer.

The catalysed reaction is uridine(38/39/40) in tRNA = pseudouridine(38/39/40) in tRNA. In terms of biological role, formation of pseudouridine at positions 38, 39 and 40 in the anticodon stem and loop of transfer RNAs. This chain is tRNA pseudouridine synthase A, found in Corynebacterium efficiens (strain DSM 44549 / YS-314 / AJ 12310 / JCM 11189 / NBRC 100395).